Here is a 70-residue protein sequence, read N- to C-terminus: Turripeptide Pal9.2 (70 aa).

The first 20 residues, M1–G20, serve as a signal peptide directing secretion. The Kazal-like domain occupies Q21–C70. Cystine bridges form between C26–C56, C30–C49, and C38–C70.

The protein belongs to the conopeptide P-like superfamily. As to expression, expressed by the venom duct.

The protein resides in the secreted. In terms of biological role, acts as a neurotoxin by inhibiting an ion channel. May also act as a serine protease inhibitor, since it possess the kazal serine protease inhibitor signature. The chain is Turripeptide Pal9.2 from Polystira albida (White giant-turris).